The primary structure comprises 151 residues: Nucleoside diphosphate kinase (151 aa).

Positions 9, 57, 85, 91, 102, and 112 each coordinate ATP. The active-site Pros-phosphohistidine intermediate is the H115.

Belongs to the NDK family. Mg(2+) is required as a cofactor.

It is found in the cytoplasm. It catalyses the reaction a 2'-deoxyribonucleoside 5'-diphosphate + ATP = a 2'-deoxyribonucleoside 5'-triphosphate + ADP. The enzyme catalyses a ribonucleoside 5'-diphosphate + ATP = a ribonucleoside 5'-triphosphate + ADP. Its function is as follows. Major role in the synthesis of nucleoside triphosphates other than ATP. The ATP gamma phosphate is transferred to the NDP beta phosphate via a ping-pong mechanism, using a phosphorylated active-site intermediate. The sequence is that of Nucleoside diphosphate kinase from Archaeoglobus fulgidus (strain ATCC 49558 / DSM 4304 / JCM 9628 / NBRC 100126 / VC-16).